The sequence spans 338 residues: MSTLRLLISDSYDPWFNLAVEESIFRQMPATQRVLFLWRNADTVVIGRAQNPWKECNTRRMEKDNVRLARRSSGGGAVFHDLGNTCFTFMAGKPEYDKTISTNIVLAALNSLGVMADASGRNDLVVKTAEGDRKVSGSAYRETKDRGFHHGTLLLNADLSRLANYLNPDKKKLAAKGITSVRSRVANLTELLPGLSHEQVCQAVAEAFFAHYGERVEAEVISPDKTPDLPNFAETFALQSSWEWNFGQAPAFSHLLDERFTWGGVELHFDVEKGYITRTQVFTDSLNPAPQEALAERLQGCQYRAEILQQACDALRVDFPEQEKELQELSAWIAGAVR.

Residues 29-216 (PATQRVLFLW…AFFAHYGERV (188 aa)) enclose the BPL/LPL catalytic domain. ATP contacts are provided by residues Arg-71, 76 to 79 (GAVF), and Lys-134. Lys-134 provides a ligand contact to (R)-lipoate.

This sequence belongs to the LplA family. As to quaternary structure, monomer.

It is found in the cytoplasm. It catalyses the reaction L-lysyl-[lipoyl-carrier protein] + (R)-lipoate + ATP = N(6)-[(R)-lipoyl]-L-lysyl-[lipoyl-carrier protein] + AMP + diphosphate + H(+). Its pathway is protein modification; protein lipoylation via exogenous pathway; protein N(6)-(lipoyl)lysine from lipoate: step 1/2. The protein operates within protein modification; protein lipoylation via exogenous pathway; protein N(6)-(lipoyl)lysine from lipoate: step 2/2. In terms of biological role, catalyzes both the ATP-dependent activation of exogenously supplied lipoate to lipoyl-AMP and the transfer of the activated lipoyl onto the lipoyl domains of lipoate-dependent enzymes. The chain is Lipoate-protein ligase A from Salmonella arizonae (strain ATCC BAA-731 / CDC346-86 / RSK2980).